A 416-amino-acid polypeptide reads, in one-letter code: Putative gustatory receptor 57a (416 aa).

Residues 1-13 (MAVLYFFREPETV) lie on the Cytoplasmic side of the membrane. The helical transmembrane segment at 14 to 34 (FDCAAFICILQFLMGCNGFGI) threads the bilayer. Over 35 to 48 (RRSTFRISWASRIY) the chain is Extracellular. A helical membrane pass occupies residues 49 to 69 (SMSVAIAAFCCLFGSLSVLLA). Topologically, residues 70-83 (EEDIRERLAKADNL) are cytoplasmic. The chain crosses the membrane as a helical span at residues 84–104 (VLSISALELLMSTLVFGVTVI). Topologically, residues 105–143 (SLQVFARRHLGIYQRLAALDARLMSDFGANLNYRKMLRK) are extracellular. The chain crosses the membrane as a helical span at residues 144-164 (NIAVLGIVTTIYLMAINSAAV). Over 165 to 171 (QVASGHR) the chain is Cytoplasmic. Residues 172–192 (ALFLLFALCYTIVTGGPHFTG) form a helical membrane-spanning segment. The Extracellular portion of the chain corresponds to 193–295 (YVHMTLAEML…NEEENGSCYR (103 aa)). The N-linked (GlcNAc...) asparagine glycan is linked to Asn290. The helical transmembrane segment at 296-316 (MLGYLALVMIPPLYKLLIAPF) threads the bilayer. Topologically, residues 317 to 374 (YCDRTIYEARRCLRLVEKLDDWFPQKSSLRPLVESLMSWRIQAKIQFTSGLDVVLSRK) are cytoplasmic. A helical membrane pass occupies residues 375–395 (VIGLFTSILVNYLLILIQFAM). At 396 to 416 (TQKMGEQIEQQKIALQEWIGF) the chain is on the extracellular side.

This sequence belongs to the insect chemoreceptor superfamily. Gustatory receptor (GR) family. Gr57a subfamily. In larvae, is expressed in neurons of the terminal external chemosensory organ as well as in the dorsal pharyngeal sense organ.

Its subcellular location is the cell membrane. Its function is as follows. Probable gustatory receptor which mediates acceptance or avoidance behavior, depending on its substrates. This is Putative gustatory receptor 57a (Gr57a) from Drosophila melanogaster (Fruit fly).